Consider the following 145-residue polypeptide: Lymphocyte antigen 6 complex locus protein G5c (145 aa).

The first 38 residues, 1–38 (MSGLAASWSLKPLGPHGVTQALCAVLLAVLVTMNVVLG), serve as a signal peptide directing secretion. The UPAR/Ly6 domain maps to 55-145 (LHCYRCLLET…NPKNRKNTMH (91 aa)). Cystine bridges form between C57/C84, C60/C69, C76/C102, C111/C128, and C129/C134. N-linked (GlcNAc...) asparagine glycosylation is present at N91.

Forms oligomers. N-glycosylated. In terms of tissue distribution, expression restricted to the caput of epididymis. Detected only from day 24 postnatum.

Its subcellular location is the secreted. Functionally, may have a role in hematopoietic cell differentiation. The sequence is that of Lymphocyte antigen 6 complex locus protein G5c (Ly6g5c) from Rattus norvegicus (Rat).